We begin with the raw amino-acid sequence, 373 residues long: Queuine tRNA-ribosyltransferase (373 aa).

Asp-90 serves as the catalytic Proton acceptor. Residues 90–94, Asp-144, Gln-193, and Gly-220 contribute to the substrate site; that span reads DSGGF. An RNA binding region spans residues 251–257; it reads GVGTPED. Asp-270 functions as the Nucleophile in the catalytic mechanism. The tract at residues 275–279 is RNA binding; important for wobble base 34 recognition; the sequence is TRNAR. Zn(2+)-binding residues include Cys-308, Cys-310, Cys-313, and His-339.

The protein belongs to the queuine tRNA-ribosyltransferase family. As to quaternary structure, homodimer. Within each dimer, one monomer is responsible for RNA recognition and catalysis, while the other monomer binds to the replacement base PreQ1. Requires Zn(2+) as cofactor.

The catalysed reaction is 7-aminomethyl-7-carbaguanine + guanosine(34) in tRNA = 7-aminomethyl-7-carbaguanosine(34) in tRNA + guanine. It participates in tRNA modification; tRNA-queuosine biosynthesis. Functionally, catalyzes the base-exchange of a guanine (G) residue with the queuine precursor 7-aminomethyl-7-deazaguanine (PreQ1) at position 34 (anticodon wobble position) in tRNAs with GU(N) anticodons (tRNA-Asp, -Asn, -His and -Tyr). Catalysis occurs through a double-displacement mechanism. The nucleophile active site attacks the C1' of nucleotide 34 to detach the guanine base from the RNA, forming a covalent enzyme-RNA intermediate. The proton acceptor active site deprotonates the incoming PreQ1, allowing a nucleophilic attack on the C1' of the ribose to form the product. After dissociation, two additional enzymatic reactions on the tRNA convert PreQ1 to queuine (Q), resulting in the hypermodified nucleoside queuosine (7-(((4,5-cis-dihydroxy-2-cyclopenten-1-yl)amino)methyl)-7-deazaguanosine). The polypeptide is Queuine tRNA-ribosyltransferase (Campylobacter jejuni subsp. jejuni serotype O:23/36 (strain 81-176)).